We begin with the raw amino-acid sequence, 420 residues long: RING finger protein 39 (420 aa).

The RING-type zinc-finger motif lies at Cys88–Gly135. In terms of domain architecture, B30.2/SPRY spans Asp210–Ser420.

Expressed in testis.

It is found in the cytoplasm. It catalyses the reaction S-ubiquitinyl-[E2 ubiquitin-conjugating enzyme]-L-cysteine + [acceptor protein]-L-lysine = [E2 ubiquitin-conjugating enzyme]-L-cysteine + N(6)-ubiquitinyl-[acceptor protein]-L-lysine.. Its pathway is protein modification; protein ubiquitination. Its function is as follows. Plays an inhibitory role in anti-RNA viral innate immunity by targeting the adapter DDX3X and promoting its 'Lys-48'-linked polyubiquitination. Alternatively, enhances the cGAS-STING pathway activation by promoting 'Lys-63'-linked ubiquitination of STING1, facilitating the STING1-TBK1 complex formation and STING1 activation. (Microbial infection) Plays a positive role in human immunodeficiency virus (HIV-1) replication. The chain is RING finger protein 39 (RNF39) from Homo sapiens (Human).